Reading from the N-terminus, the 356-residue chain is uncharacterized protein (356 aa).

This is an uncharacterized protein from Bacillus subtilis (strain 168).